Here is a 447-residue protein sequence, read N- to C-terminus: UPF0210 protein LBUL_0934 (447 aa).

Belongs to the UPF0210 family. In terms of assembly, homodimer.

The protein is UPF0210 protein LBUL_0934 of Lactobacillus delbrueckii subsp. bulgaricus (strain ATCC BAA-365 / Lb-18).